We begin with the raw amino-acid sequence, 420 residues long: D-tagatose-1,6-bisphosphate aldolase subunit GatZ (420 aa).

It belongs to the GatZ/KbaZ family. GatZ subfamily. In terms of assembly, forms a complex with GatY.

The protein operates within carbohydrate metabolism; D-tagatose 6-phosphate degradation; D-glyceraldehyde 3-phosphate and glycerone phosphate from D-tagatose 6-phosphate: step 2/2. Functionally, component of the tagatose-1,6-bisphosphate aldolase GatYZ that is required for full activity and stability of the Y subunit. Could have a chaperone-like function for the proper and stable folding of GatY. When expressed alone, GatZ does not show any aldolase activity. Is involved in the catabolism of galactitol. In Escherichia coli (strain SE11), this protein is D-tagatose-1,6-bisphosphate aldolase subunit GatZ.